The following is a 275-amino-acid chain: Large ribosomal subunit protein uL2 (275 aa).

Positions 221-275 are disordered; that stretch reads RGTAMNPVDHPHGGGEGRTGEGRVPVNPWGQPTKGYRTRSNKRTNSMIVQRRHKR. Residues 229–241 show a composition bias toward basic and acidic residues; sequence DHPHGGGEGRTGE.

It belongs to the universal ribosomal protein uL2 family. As to quaternary structure, part of the 50S ribosomal subunit. Forms a bridge to the 30S subunit in the 70S ribosome.

In terms of biological role, one of the primary rRNA binding proteins. Required for association of the 30S and 50S subunits to form the 70S ribosome, for tRNA binding and peptide bond formation. It has been suggested to have peptidyltransferase activity; this is somewhat controversial. Makes several contacts with the 16S rRNA in the 70S ribosome. This is Large ribosomal subunit protein uL2 from Dechloromonas aromatica (strain RCB).